The primary structure comprises 1159 residues: Caspase recruitment domain-containing protein 11 (1159 aa).

Residues 18–110 form the CARD domain; sequence EEEALWDNVE…ELYKLVTGKE (93 aa). Residues 111-128 form a linker region; that stretch reads PTRRFSTIVVEEGHEGLT. Residues 176 to 449 adopt a coiled-coil conformation; that stretch reads FQERYYKMKE…KDNGSLDQSL (274 aa). Positions 441–496 are disordered; sequence DNGSLDQSLPRHLPATIISQNLGDTSPRTNGQEADDSSTSEESPEDSKYFLPYHPP. 2 positions are modified to phosphoserine: Ser448 and Ser466. The segment at 450 to 671 is inhibitory domain (ID); the sequence is PRHLPATIIS…GHVRGTGPLV (222 aa). The segment covering 457-472 has biased composition (polar residues); it reads IISQNLGDTSPRTNGQ. Residues 473-484 are compositionally biased toward acidic residues; that stretch reads EADDSSTSEESP. Phosphoserine occurs at positions 512 and 540. A disordered region spans residues 532 to 578; that stretch reads HEEDFTDGSPSSSRSLPVTSSFSKMQPHRSRSSIMSITAEPPGNDSI. Over residues 540–554 the composition is skewed to low complexity; that stretch reads SPSSSRSLPVTSSFS. At Ser564 the chain carries Phosphoserine; by PKC/PRKCB and PKC/PRKCQ. Ser598 is modified (phosphoserine). A disordered region spans residues 610–631; sequence NHERYSFGPPSIHSSSSSHQSE. Residues 620–630 are compositionally biased toward low complexity; the sequence is SIHSSSSSHQS. Phosphoserine; by PKC/PRKCB and PKC/PRKCQ occurs at positions 649 and 657. Residues 672–760 form the PDZ domain; the sequence is QHTTLNGDGL…LITLHYKVNH (89 aa). Phosphoserine is present on residues Ser891 and Ser930. The Guanylate kinase-like domain occupies 978–1145; the sequence is RRRPVLFTPT…LLRVLKDKIV (168 aa).

In terms of assembly, homodimer; disulfide-linked. Homomultimer; polymerizes following activation, forming a nucleating helical template that seeds BCL10-filament formation via a CARD-CARD interaction. Interacts (via CARD domain) with BCL10 (via CARD domain); interaction takes place following CARD11 activation and polymerization, leading to the formation of a filamentous CBM complex assembly. Component of a CBM complex (CARD11-BCL10-MALT1) complex involved in NF-kappa-B activation. Found in a membrane raft complex, at least composed of BCL10, CARD11, DPP4 and IKBKB. Interacts (via PDZ domain) with DPP4 (via cytoplasmic tail). Phosphorylation at Ser-564, Ser-649 and Ser-657 by PRKCB and PRKCQ leads to a shift from an inactive to an active form that activates the NF-kappa-B signaling.

It localises to the cytoplasm. The protein localises to the membrane raft. With respect to regulation, maintained in an autoinhibited state via homodimerization in which the CARD domain forms an extensive interaction with the adjacent linker and coiled-coil regions. Activation downstream of T-cell receptor (TCR) by phosphorylation by PRKCB and PRKCQ triggers CARD11 homooligomerization and BCL10 recruitment, followed by activation of NF-kappa-B. In terms of biological role, adapter protein that plays a key role in adaptive immune response by transducing the activation of NF-kappa-B downstream of T-cell receptor (TCR) and B-cell receptor (BCR) engagement. Transduces signals downstream TCR or BCR activation via the formation of a multiprotein complex together with BCL10 and MALT1 that induces NF-kappa-B and MAP kinase p38 (MAPK11, MAPK12, MAPK13 and/or MAPK14) pathways. Upon activation in response to TCR or BCR triggering, CARD11 homooligomerizes to form a nucleating helical template that recruits BCL10 via CARD-CARD interaction, thereby promoting polymerization of BCL10 and subsequent recruitment of MALT1: this leads to I-kappa-B kinase (IKK) phosphorylation and degradation, and release of NF-kappa-B proteins for nuclear translocation. Its binding to DPP4 induces T-cell proliferation and NF-kappa-B activation in a T-cell receptor/CD3-dependent manner. Promotes linear ubiquitination of BCL10 by promoting the targeting of BCL10 to RNF31/HOIP. Stimulates the phosphorylation of BCL10. Also activates the TORC1 signaling pathway. This is Caspase recruitment domain-containing protein 11 from Mus musculus (Mouse).